The chain runs to 553 residues: Arginine--tRNA ligase (553 aa).

Residues 130–140 (ANPTGDLHIGH) carry the 'HIGH' region motif.

This sequence belongs to the class-I aminoacyl-tRNA synthetase family. Monomer.

The protein resides in the cytoplasm. The enzyme catalyses tRNA(Arg) + L-arginine + ATP = L-arginyl-tRNA(Arg) + AMP + diphosphate. The protein is Arginine--tRNA ligase of Staphylococcus aureus (strain MRSA252).